The following is a 192-amino-acid chain: MENSPLTLDRFLSRFQLLRPQMSRSSLNQRQAAVLVPVVRRPEPGLLLTKRAATLRKHAGQVAFPGGAVDDTDASLIAAALREAQEEVAIPPEAVDVIGVLPPVDSVTGFQVTPVVGIIPPDLPYHASEDEVAAVFEMPLAEALRLGRYHPLDIHRRGNHHRVWLSWYQHYFVWGMTAGIIRELALQIGEKP.

The Nudix hydrolase domain occupies Gln-29–His-160. A Nudix box motif is present at residues Gly-67 to Ala-89. Residues Glu-83 and Glu-87 each contribute to the Mg(2+) site.

This sequence belongs to the Nudix hydrolase family. PCD1 subfamily. The cofactor is Mn(2+). Requires Mg(2+) as cofactor.

Probably mediates the hydrolysis of some nucleoside diphosphate derivatives. This is an uncharacterized protein from Cronobacter sakazakii (strain ATCC BAA-894) (Enterobacter sakazakii).